The following is a 912-amino-acid chain: Serine/threonine-protein kinase D1 (912 aa).

Position 95 is a phosphotyrosine (Tyr95). The segment at 146-196 adopts a Phorbol-ester/DAG-type 1 zinc-finger fold; it reads PHALFVHSYRAPAFCDHCGEMLWGLVRQGLKCEGCGLNYHKRCAFKIPNNC. Phosphoserine occurs at positions 205, 208, 219, and 223. The Phorbol-ester/DAG-type 2 zinc-finger motif lies at 270–320; sequence PHTFVIHSYTRPTVCQYCKKLLKGLFRQGLQCKDCRFNCHKRCAPKVPNNC. Phosphoserine is present on Ser345. Residues 377 to 402 are disordered; it reads NDSGEMQDPDPDHEDANRTISPSTSN. Phosphoserine; by MAPK13 occurs at positions 397 and 401. One can recognise a PH domain in the interval 422-541; it reads TVMKEGWMVH…WEIAIQHALM (120 aa). At Tyr432 the chain carries Phosphotyrosine. Ser448 carries the phosphoserine modification. Tyr463 carries the post-translational modification Phosphotyrosine; by ABL. A Phosphoserine modification is found at Ser473. Tyr502 carries the phosphotyrosine modification. Ser548 carries the phosphoserine modification. The Protein kinase domain occupies 583-839; that stretch reads IFPDEVLGSG…VDKTLSHPWL (257 aa). Residues 589-597 and Lys612 contribute to the ATP site; that span reads LGSGQFGIV. Asp706 serves as the catalytic Proton acceptor. At Ser738 the chain carries Phosphoserine; by PKC/PRKCD. Ser742 is modified (phosphoserine; by autocatalysis and PKC/PRKCD). Position 749 is a phosphotyrosine (Tyr749). Phosphoserine; by autocatalysis is present on Ser910.

Belongs to the protein kinase superfamily. CAMK Ser/Thr protein kinase family. PKD subfamily. In terms of assembly, interacts (via N-terminus) with ADAP1/CENTA1. Interacts with MAPK13. Interacts with DAPK1 in an oxidative stress-regulated manner. Interacts with USP28; the interaction induces phosphorylation of USP28 and activated KRAS-mediated stabilization of ZNF304. Interacts with AKAP13 (via C-terminal domain). Mg(2+) serves as cofactor. Post-translationally, phosphorylated at Ser-397 and Ser-401 by MAPK13 during regulation of insulin secretion in pancreatic beta cells. Phosphorylated by DAPK1. Phosphorylated at Tyr-95 and by ABL at Tyr-463, which primes the kinase in response to oxidative stress, and promotes a second step activating phosphorylation at Ser-738/Ser-742 by PKRD. Phosphorylated on Ser-910 upon S.enterica infection in macrophages.

The protein localises to the cytoplasm. It is found in the cell membrane. The protein resides in the golgi apparatus. It localises to the trans-Golgi network. It catalyses the reaction L-seryl-[protein] + ATP = O-phospho-L-seryl-[protein] + ADP + H(+). The enzyme catalyses L-threonyl-[protein] + ATP = O-phospho-L-threonyl-[protein] + ADP + H(+). With respect to regulation, activated by DAG and phorbol esters. Phorbol-ester/DAG-type domain 1 binds DAG with high affinity and appears to play the dominant role in mediating translocation to the cell membrane and trans-Golgi network. Phorbol-ester/DAG-type domain 2 binds phorbol ester with higher affinity. Autophosphorylation of Ser-742 and phosphorylation of Ser-738 by PKC relieves auto-inhibition by the PH domain. Phosphorylation on Tyr-463 by the SRC-ABL1 pathway in response to oxidative stress, is also required for activation. Activated by DAPK1 under oxidative stress. Its function is as follows. Serine/threonine-protein kinase that converts transient diacylglycerol (DAG) signals into prolonged physiological effects downstream of PKC, and is involved in the regulation of MAPK8/JNK1 and Ras signaling, Golgi membrane integrity and trafficking, cell survival through NF-kappa-B activation, cell migration, cell differentiation by mediating HDAC7 nuclear export, cell proliferation via MAPK1/3 (ERK1/2) signaling, and plays a role in cardiac hypertrophy, VEGFA-induced angiogenesis, genotoxic-induced apoptosis and flagellin-stimulated inflammatory response. Phosphorylates the epidermal growth factor receptor (EGFR) on dual threonine residues, which leads to the suppression of epidermal growth factor (EGF)-induced MAPK8/JNK1 activation and subsequent JUN phosphorylation. Phosphorylates RIN1, inducing RIN1 binding to 14-3-3 proteins YWHAB, YWHAE and YWHAZ and increased competition with RAF1 for binding to GTP-bound form of Ras proteins (NRAS, HRAS and KRAS). Acts downstream of the heterotrimeric G-protein beta/gamma-subunit complex to maintain the structural integrity of the Golgi membranes, and is required for protein transport along the secretory pathway. In the trans-Golgi network (TGN), regulates the fission of transport vesicles that are on their way to the plasma membrane. May act by activating the lipid kinase phosphatidylinositol 4-kinase beta (PI4KB) at the TGN for the local synthesis of phosphorylated inositol lipids, which induces a sequential production of DAG, phosphatidic acid (PA) and lyso-PA (LPA) that are necessary for membrane fission and generation of specific transport carriers to the cell surface. Under oxidative stress, is phosphorylated at Tyr-463 via SRC-ABL1 and contributes to cell survival by activating IKK complex and subsequent nuclear translocation and activation of NFKB1. Involved in cell migration by regulating integrin alpha-5/beta-3 recycling and promoting its recruitment in newly forming focal adhesion. In osteoblast differentiation, mediates the bone morphogenetic protein 2 (BMP2)-induced nuclear export of HDAC7, which results in the inhibition of HDAC7 transcriptional repression of RUNX2. In neurons, plays an important role in neuronal polarity by regulating the biogenesis of TGN-derived dendritic vesicles, and is involved in the maintenance of dendritic arborization and Golgi structure in hippocampal cells. May potentiate mitogenesis induced by the neuropeptide bombesin or vasopressin by mediating an increase in the duration of MAPK1/3 (ERK1/2) signaling, which leads to accumulation of immediate-early gene products including FOS that stimulate cell cycle progression. Plays an important role in the proliferative response induced by low calcium in keratinocytes, through sustained activation of MAPK1/3 (ERK1/2) pathway. Downstream of novel PKC signaling, plays a role in cardiac hypertrophy by phosphorylating HDAC5, which in turn triggers XPO1/CRM1-dependent nuclear export of HDAC5, MEF2A transcriptional activation and induction of downstream target genes that promote myocyte hypertrophy and pathological cardiac remodeling. Mediates cardiac troponin I (TNNI3) phosphorylation at the PKA sites, which results in reduced myofilament calcium sensitivity, and accelerated crossbridge cycling kinetics. The PRKD1-HDAC5 pathway is also involved in angiogenesis by mediating VEGFA-induced specific subset of gene expression, cell migration, and tube formation. In response to VEGFA, is necessary and required for HDAC7 phosphorylation which induces HDAC7 nuclear export and endothelial cell proliferation and migration. During apoptosis induced by cytarabine and other genotoxic agents, PRKD1 is cleaved by caspase-3 at Asp-378, resulting in activation of its kinase function and increased sensitivity of cells to the cytotoxic effects of genotoxic agents. In epithelial cells, is required for transducing flagellin-stimulated inflammatory responses by binding and phosphorylating TLR5, which contributes to MAPK14/p38 activation and production of inflammatory cytokines. Acts as an activator of NLRP3 inflammasome assembly by mediating phosphorylation of NLRP3. May play a role in inflammatory response by mediating activation of NF-kappa-B. May be involved in pain transmission by directly modulating TRPV1 receptor. Plays a role in activated KRAS-mediated stabilization of ZNF304 in colorectal cancer (CRC) cells. Regulates nuclear translocation of transcription factor TFEB in macrophages upon live S.enterica infection. This chain is Serine/threonine-protein kinase D1 (PRKD1), found in Homo sapiens (Human).